The sequence spans 99 residues: Integration host factor subunit alpha (99 aa).

It belongs to the bacterial histone-like protein family. Heterodimer of an alpha and a beta chain.

Its function is as follows. This protein is one of the two subunits of integration host factor, a specific DNA-binding protein that functions in genetic recombination as well as in transcriptional and translational control. In Mannheimia haemolytica (Pasteurella haemolytica), this protein is Integration host factor subunit alpha (ihfA).